A 338-amino-acid chain; its full sequence is 1-aminocyclopropane-1-carboxylate deaminase (338 aa).

Lys51 carries the post-translational modification N6-(pyridoxal phosphate)lysine. The active-site Nucleophile is the Ser78.

This sequence belongs to the ACC deaminase/D-cysteine desulfhydrase family. As to quaternary structure, homotrimer. It depends on pyridoxal 5'-phosphate as a cofactor.

It catalyses the reaction 1-aminocyclopropane-1-carboxylate + H2O = 2-oxobutanoate + NH4(+). Catalyzes a cyclopropane ring-opening reaction, the irreversible conversion of 1-aminocyclopropane-1-carboxylate (ACC) to ammonia and alpha-ketobutyrate. Allows growth on ACC as a nitrogen source. This chain is 1-aminocyclopropane-1-carboxylate deaminase, found in Burkholderia multivorans (strain ATCC 17616 / 249).